The primary structure comprises 131 residues: MPTIQQLVKSARQKLVNKTKAPALKSCPQRRGICLRVYTVTPKKPNSALRKVARVRLSSGFEVTAYIPGIGHNLQEHAVVLVRGGRVKDLPGVRYHIVRGTLDTAGVKGRVQGRSKYGVKKVSAKSAGKSK.

The protein belongs to the universal ribosomal protein uS12 family. As to quaternary structure, part of the 30S ribosomal subunit.

The protein localises to the plastid. Its subcellular location is the chloroplast. Its function is as follows. With S4 and S5 plays an important role in translational accuracy. Located at the interface of the 30S and 50S subunits. The protein is Small ribosomal subunit protein uS12c (rps12) of Stigeoclonium helveticum (Green alga).